Consider the following 389-residue polypeptide: Ribonucleoside-diphosphate reductase subunit M2 (389 aa).

S20 is subject to Phosphoserine. Phosphothreonine is present on T33. The short motif at 49–51 is the Cy element; that stretch reads RRI. Fe cation-binding residues include D138, E169, and H172. Y176 is a catalytic residue. 3 residues coordinate Fe cation: E232, E266, and H269.

This sequence belongs to the ribonucleoside diphosphate reductase small chain family. Heterodimer of a large and a small subunit. Interacts (via Cy motif and when phosphorylated at Thr-33) with CCNF; the interaction occurs exclusively in G2 and early M. It depends on Fe cation as a cofactor. In terms of processing, phosphorylation on Ser-20 relieves the inhibitory effect on Wnt signaling. Phosphorylated on Thr-33 by CDK1 and CDK2; predominantly in G2 and M phase. Ubiquitinated by the SCF(CCNF) E3 ubiquitin-protein ligase complex; leading to its degradation by the proteasome.

The protein localises to the cytoplasm. Its subcellular location is the nucleus. The enzyme catalyses a 2'-deoxyribonucleoside 5'-diphosphate + [thioredoxin]-disulfide + H2O = a ribonucleoside 5'-diphosphate + [thioredoxin]-dithiol. Functionally, provides the precursors necessary for DNA synthesis. Catalyzes the biosynthesis of deoxyribonucleotides from the corresponding ribonucleotides. Inhibits Wnt signaling. This chain is Ribonucleoside-diphosphate reductase subunit M2 (RRM2), found in Homo sapiens (Human).